We begin with the raw amino-acid sequence, 224 residues long: Enolase-phosphatase E1 (224 aa).

The protein belongs to the HAD-like hydrolase superfamily. MasA/MtnC family. Monomer. Requires Mg(2+) as cofactor.

It catalyses the reaction 5-methylsulfanyl-2,3-dioxopentyl phosphate + H2O = 1,2-dihydroxy-5-(methylsulfanyl)pent-1-en-3-one + phosphate. It functions in the pathway amino-acid biosynthesis; L-methionine biosynthesis via salvage pathway; L-methionine from S-methyl-5-thio-alpha-D-ribose 1-phosphate: step 3/6. Its pathway is amino-acid biosynthesis; L-methionine biosynthesis via salvage pathway; L-methionine from S-methyl-5-thio-alpha-D-ribose 1-phosphate: step 4/6. Its function is as follows. Bifunctional enzyme that catalyzes the enolization of 2,3-diketo-5-methylthiopentyl-1-phosphate (DK-MTP-1-P) into the intermediate 2-hydroxy-3-keto-5-methylthiopentenyl-1-phosphate (HK-MTPenyl-1-P), which is then dephosphorylated to form the acireductone 1,2-dihydroxy-3-keto-5-methylthiopentene (DHK-MTPene). This Thioalkalivibrio sulfidiphilus (strain HL-EbGR7) protein is Enolase-phosphatase E1.